Here is a 307-residue protein sequence, read N- to C-terminus: Fructokinase (307 aa).

This sequence belongs to the carbohydrate kinase PfkB family.

It carries out the reaction D-fructose + ATP = D-fructose 6-phosphate + ADP + H(+). The sequence is that of Fructokinase (scrK) from Vibrio alginolyticus.